A 701-amino-acid chain; its full sequence is DNA ligase 2 (701 aa).

The segment covering 1-10 has biased composition (polar residues); it reads MSPAPQNRQP. The interval 1 to 21 is disordered; that stretch reads MSPAPQNRQPSGVPVGGQFAA. Residues 64 to 68, 111 to 112, and Glu-133 each bind NAD(+); these read DAEFD and SL. Lys-135 acts as the N6-AMP-lysine intermediate in catalysis. NAD(+) is bound by residues Arg-156, Glu-189, Lys-302, and Lys-326. Zn(2+) contacts are provided by Cys-420, Cys-423, Cys-436, and Cys-441. A compositionally biased stretch (low complexity) spans 603-613; that stretch reads KAAPAAGAKAP. The disordered stretch occupies residues 603 to 623; that stretch reads KAAPAAGAKAPKLTKPDGKPM. Positions 615 to 701 constitute a BRCT domain; sequence LTKPDGKPMN…FAQMVEDGEV (87 aa).

It belongs to the NAD-dependent DNA ligase family. LigA subfamily. The cofactor is Mg(2+). Requires Mn(2+) as cofactor.

It carries out the reaction NAD(+) + (deoxyribonucleotide)n-3'-hydroxyl + 5'-phospho-(deoxyribonucleotide)m = (deoxyribonucleotide)n+m + AMP + beta-nicotinamide D-nucleotide.. Functionally, DNA ligase that catalyzes the formation of phosphodiester linkages between 5'-phosphoryl and 3'-hydroxyl groups in double-stranded DNA using NAD as a coenzyme and as the energy source for the reaction. It is essential for DNA replication and repair of damaged DNA. This chain is DNA ligase 2, found in Pseudarthrobacter chlorophenolicus (strain ATCC 700700 / DSM 12829 / CIP 107037 / JCM 12360 / KCTC 9906 / NCIMB 13794 / A6) (Arthrobacter chlorophenolicus).